The following is a 148-amino-acid chain: Nucleoside diphosphate kinase 1 (148 aa).

The ATP site is built by K9, F57, R85, T91, R102, and N112. H115 acts as the Pros-phosphohistidine intermediate in catalysis.

The protein belongs to the NDK family. The cofactor is Mg(2+). The N-terminus is blocked.

The catalysed reaction is a 2'-deoxyribonucleoside 5'-diphosphate + ATP = a 2'-deoxyribonucleoside 5'-triphosphate + ADP. It carries out the reaction a ribonucleoside 5'-diphosphate + ATP = a ribonucleoside 5'-triphosphate + ADP. In terms of biological role, major role in the synthesis of nucleoside triphosphates other than ATP. The ATP gamma phosphate is transferred to the NDP beta phosphate via a ping-pong mechanism, using a phosphorylated active-site intermediate. This Spinacia oleracea (Spinach) protein is Nucleoside diphosphate kinase 1 (NDPK1).